We begin with the raw amino-acid sequence, 515 residues long: Bifunctional purine biosynthesis protein PurH (515 aa).

The MGS-like domain occupies 1-145 (MTKRVLISVS…KNHASVTVVV (145 aa)).

Belongs to the PurH family.

The catalysed reaction is (6R)-10-formyltetrahydrofolate + 5-amino-1-(5-phospho-beta-D-ribosyl)imidazole-4-carboxamide = 5-formamido-1-(5-phospho-D-ribosyl)imidazole-4-carboxamide + (6S)-5,6,7,8-tetrahydrofolate. The enzyme catalyses IMP + H2O = 5-formamido-1-(5-phospho-D-ribosyl)imidazole-4-carboxamide. It functions in the pathway purine metabolism; IMP biosynthesis via de novo pathway; 5-formamido-1-(5-phospho-D-ribosyl)imidazole-4-carboxamide from 5-amino-1-(5-phospho-D-ribosyl)imidazole-4-carboxamide (10-formyl THF route): step 1/1. Its pathway is purine metabolism; IMP biosynthesis via de novo pathway; IMP from 5-formamido-1-(5-phospho-D-ribosyl)imidazole-4-carboxamide: step 1/1. This is Bifunctional purine biosynthesis protein PurH from Streptococcus pneumoniae (strain 70585).